A 66-amino-acid chain; its full sequence is Beta-defensin 107A (66 aa).

The signal sequence occupies residues 1–22; sequence MKIFFFIFAALFLLAQIFQART. 2 disulfides stabilise this stretch: Cys37/Cys51 and Cys41/Cys60.

The protein belongs to the beta-defensin family.

The protein localises to the secreted. In terms of biological role, has antibacterial activity. The protein is Beta-defensin 107A (DEFB107A) of Gorilla gorilla gorilla (Western lowland gorilla).